The primary structure comprises 391 residues: 3-ketoacyl-CoA thiolase (391 aa).

Cys-95 (acyl-thioester intermediate) is an active-site residue. Residues His-347 and Cys-377 each act as proton acceptor in the active site.

The protein belongs to the thiolase-like superfamily. Thiolase family. As to quaternary structure, heterotetramer of two alpha chains (FadB) and two beta chains (FadA).

The protein localises to the cytoplasm. It catalyses the reaction an acyl-CoA + acetyl-CoA = a 3-oxoacyl-CoA + CoA. It participates in lipid metabolism; fatty acid beta-oxidation. Catalyzes the final step of fatty acid oxidation in which acetyl-CoA is released and the CoA ester of a fatty acid two carbons shorter is formed. The polypeptide is 3-ketoacyl-CoA thiolase (Ectopseudomonas mendocina (strain ymp) (Pseudomonas mendocina)).